A 92-amino-acid polypeptide reads, in one-letter code: DNA-directed RNA polymerase subunit Rpo11 (92 aa).

Belongs to the archaeal Rpo11/eukaryotic RPB11/RPC19 RNA polymerase subunit family. As to quaternary structure, part of the RNA polymerase complex.

It is found in the cytoplasm. The catalysed reaction is RNA(n) + a ribonucleoside 5'-triphosphate = RNA(n+1) + diphosphate. DNA-dependent RNA polymerase (RNAP) catalyzes the transcription of DNA into RNA using the four ribonucleoside triphosphates as substrates. In Methanosarcina acetivorans (strain ATCC 35395 / DSM 2834 / JCM 12185 / C2A), this protein is DNA-directed RNA polymerase subunit Rpo11.